The chain runs to 338 residues: Probable O-antigen biosynthesis glycosyltransferase WbiN (338 aa).

The protein belongs to the glycosyltransferase group 1 family. Glycosyltransferase 4 subfamily.

The catalysed reaction is N-acetyl-alpha-D-galactosaminyl-di-trans,octa-cis-undecaprenyl diphosphate + UDP-N-acetyl-alpha-D-galactosamine = alpha-D-GalNAc-(1-&gt;3)-alpha-D-GalNAc-di-trans,octa-cis-undecaprenyl diphosphate + UDP + H(+). The protein operates within bacterial outer membrane biogenesis; LPS O-antigen biosynthesis. In terms of biological role, involved in the assembly of the O-repeating unit during O-antigen biosynthesis. The polypeptide is Probable O-antigen biosynthesis glycosyltransferase WbiN (Escherichia coli).